Here is a 160-residue protein sequence, read N- to C-terminus: Oocyte-secreted protein 4B (160 aa).

Positions 1–13 (MKTSVLLAITAMC) are cleaved as a signal peptide.

Belongs to the PLAC1 family.

The protein resides in the secreted. The protein is Oocyte-secreted protein 4B of Homo sapiens (Human).